Here is a 410-residue protein sequence, read N- to C-terminus: Mating-type locus allele B4 protein (410 aa).

Positions 1–110 (MSSDPKISIT…ANASSPVVGC (110 aa)) are variable domain between B alleles. Residues 107–184 (VVGCRELSED…NARRRSGWSH (78 aa)) constitute a DNA-binding region (homeobox; TALE-type). The tract at residues 111-410 (RELSEDLPAY…PFLCLSVAFV (300 aa)) is highly conserved between B alleles. Disordered regions lie at residues 202–241 (RAKLSSSNQSTPPSPTSEYPSNNLDDFLSDNLGRPLTPAD), 278–335 (TPKP…TPEL), and 375–394 (RGNRKVKALPKRAGKQQPDE). Over residues 206–222 (SSSNQSTPPSPTSEYPS) the composition is skewed to low complexity. The Nuclear localization signal signature appears at 276 to 308 (KKTPKPGMPRPVTTVAKRQPARKTKPAAKPKSR). A compositionally biased stretch (basic residues) spans 294 to 307 (QPARKTKPAAKPKS). Residues 312–335 (PRASTTPSIDSTLDSSKLESTPEL) show a composition bias toward polar residues. The interval 333–410 (PELSMCSTAD…PFLCLSVAFV (78 aa)) is not essential for B4 function. The span at 375–388 (RGNRKVKALPKRAG) shows a compositional bias: basic residues.

The protein belongs to the TALE/M-ATYP homeobox family.

It is found in the nucleus. The B locus has at least 25 alleles, and any combination of two different B alleles yields a multimeric regulatory protein, that activates genes responsible for the pathogenicity and for the sexual development of the fungus within the corn plant. The chain is Mating-type locus allele B4 protein from Mycosarcoma maydis (Corn smut fungus).